The sequence spans 178 residues: MTTLRAFTCDDLFRFNNINLDPLTETYGIPFYLQYLAHWPEYFIVAEAPGGELMGYIMGKAEGSVAREEWHGHVTALSVAPEFRRLGLAAKLMELLEEISERKGGFFVDLFVRVSNQVAVNMYKQLGYSVYRTVIEYYSASNGEPDEDAYDMRKALSRDTEKKSIIPLPHPVRPEDIE.

The N-acetyltransferase domain maps to 2–157; that stretch reads TTLRAFTCDD…DAYDMRKALS (156 aa).

It belongs to the acetyltransferase family. ARD1 subfamily. In terms of assembly, component of the N-terminal acetyltransferase B (NatB) complex which is composed of NAA20 and NAA25.

Its subcellular location is the cytoplasm. It localises to the nucleus. It carries out the reaction N-terminal L-methionyl-L-asparaginyl-[protein] + acetyl-CoA = N-terminal N(alpha)-acetyl-L-methionyl-L-asparaginyl-[protein] + CoA + H(+). The enzyme catalyses N-terminal L-methionyl-L-glutaminyl-[protein] + acetyl-CoA = N-terminal N(alpha)-acetyl-L-methionyl-L-glutaminyl-[protein] + CoA + H(+). The catalysed reaction is N-terminal L-methionyl-L-aspartyl-[protein] + acetyl-CoA = N-terminal N(alpha)-acetyl-L-methionyl-L-aspartyl-[protein] + CoA + H(+). It catalyses the reaction N-terminal L-methionyl-L-glutamyl-[protein] + acetyl-CoA = N-terminal N(alpha)-acetyl-L-methionyl-L-glutamyl-[protein] + CoA + H(+). Catalytic subunit of the NatB complex which catalyzes acetylation of the N-terminal methionine residues of peptides beginning with Met-Asp, Met-Glu, Met-Asn and Met-Gln. Proteins with cell cycle functions are overrepresented in the pool of NatB substrates. Required for maintaining the structure and function of actomyosin fibers and for proper cellular migration. This is N-alpha-acetyltransferase 20 (NAA20) from Homo sapiens (Human).